Here is a 509-residue protein sequence, read N- to C-terminus: Maturase K (509 aa).

It belongs to the intron maturase 2 family. MatK subfamily.

The protein localises to the plastid. It is found in the chloroplast. In terms of biological role, usually encoded in the trnK tRNA gene intron. Probably assists in splicing its own and other chloroplast group II introns. This chain is Maturase K, found in Galbulimima belgraveana (Northern pigeonberry ash).